Here is a 298-residue protein sequence, read N- to C-terminus: Tyrosine recombinase XerC (298 aa).

The 84-residue stretch at 1 to 84 (MNHIQEAFLN…TLRTFYEYWM (84 aa)) folds into the Core-binding (CB) domain. Residues 105–286 (YLPQFFYEEE…SNQQLRKVYL (182 aa)) enclose the Tyr recombinase domain. Residues Arg145, Lys169, His238, Arg241, and His264 contribute to the active site. Residue Tyr273 is the O-(3'-phospho-DNA)-tyrosine intermediate of the active site.

Belongs to the 'phage' integrase family. XerC subfamily. Forms a cyclic heterotetrameric complex composed of two molecules of XerC and two molecules of XerD.

It localises to the cytoplasm. Site-specific tyrosine recombinase, which acts by catalyzing the cutting and rejoining of the recombining DNA molecules. The XerC-XerD complex is essential to convert dimers of the bacterial chromosome into monomers to permit their segregation at cell division. It also contributes to the segregational stability of plasmids. The sequence is that of Tyrosine recombinase XerC from Staphylococcus aureus (strain MSSA476).